A 608-amino-acid chain; its full sequence is 1-phosphatidylinositol 4,5-bisphosphate phosphodiesterase zeta-1 (608 aa).

Positions 35–70 constitute an EF-hand domain; that stretch reads CSYIHVKQIFKDNDRLKQGRITIEEFRAIYRIITHR. Positions 155–299 constitute a PI-PLC X-box domain; that stretch reads QDMTHPLNDY…LKFKILVKNK (145 aa). Residues His170 and His215 contribute to the active site. Positions 305-324 are disordered; that stretch reads KETHERKGSDKRGDNQDKET. The PI-PLC Y-box domain maps to 349-465; sequence LSDLVIYTKA…GYILKPHFLR (117 aa). One can recognise a C2 domain in the interval 465-589; it reads RESKSYFNPS…KGYRRIPLFS (125 aa).

In terms of assembly, interacts via its C2 domain with PtdIns(3)P and, to a lesser extent, PtdIns(5)P in vitro. Requires Ca(2+) as cofactor. In terms of tissue distribution, expressed specifically in testis and sperm. Weakly expressed in pancreatic-duct cells. Up-regulated in pancreatic-duct cells from patients with cystic fibrosis.

The protein resides in the nucleus. Its subcellular location is the cytoplasm. The protein localises to the perinuclear region. It carries out the reaction a 1,2-diacyl-sn-glycero-3-phospho-(1D-myo-inositol-4,5-bisphosphate) + H2O = 1D-myo-inositol 1,4,5-trisphosphate + a 1,2-diacyl-sn-glycerol + H(+). Functionally, the production of the second messenger molecules diacylglycerol (DAG) and inositol 1,4,5-trisphosphate (IP3) is mediated by activated phosphatidylinositol-specific phospholipase C enzymes. In vitro, hydrolyzes PtdIns(4,5)P2 in a Ca(2+)-dependent manner. Triggers intracellular Ca(2+) oscillations in oocytes solely during M phase and is involved in inducing oocyte activation and initiating embryonic development up to the blastocyst stage. Is therefore a strong candidate for the egg-activating soluble sperm factor that is transferred from the sperm into the egg cytoplasm following gamete membrane fusion. May exert an inhibitory effect on phospholipase-C-coupled processes that depend on calcium ions and protein kinase C, including CFTR trafficking and function. In Homo sapiens (Human), this protein is 1-phosphatidylinositol 4,5-bisphosphate phosphodiesterase zeta-1.